The following is a 537-amino-acid chain: tRNA(His) guanylyltransferase 2 (537 aa).

Asp-307, Gly-308, and Asp-354 together coordinate Mg(2+). GTP is bound by residues 307-312 (DGCHFH) and 353-354 (SD).

Belongs to the tRNA(His) guanylyltransferase family. It depends on Mg(2+) as a cofactor.

The protein localises to the nucleus. The protein resides in the nucleoplasm. It carries out the reaction a 5'-end ribonucleotide-tRNA(His) + GTP + ATP + H2O = a 5'-end phospho-guanosine-ribonucleotide-tRNA(His) + AMP + 2 diphosphate + H(+). In terms of biological role, adds a GMP to the 5'-end of tRNA(His) after transcription and RNase P cleavage. The sequence is that of tRNA(His) guanylyltransferase 2 (THG2) from Arabidopsis thaliana (Mouse-ear cress).